A 161-amino-acid chain; its full sequence is Small ribosomal subunit protein uS9 (161 aa).

Belongs to the universal ribosomal protein uS9 family.

The protein is Small ribosomal subunit protein uS9 of Rickettsia canadensis (strain McKiel).